The following is a 345-amino-acid chain: 2-oxoglutarate-dependent ethylene/succinate-forming enzyme (345 aa).

Positions 167–288 (GWHHMRVLRF…RFAMAYFHEP (122 aa)) constitute a Fe2OG dioxygenase domain. Fe cation-binding residues include histidine 191 and histidine 270.

Belongs to the iron/ascorbate-dependent oxidoreductase family. As to quaternary structure, monomer. Requires Fe(2+) as cofactor.

It carries out the reaction 2-oxoglutarate + O2 + 2 H(+) = ethene + 3 CO2 + H2O. The catalysed reaction is L-arginine + 2-oxoglutarate + O2 = guanidine + L-glutamate 5-semialdehyde + succinate + CO2. Its pathway is alkene biosynthesis; ethylene biosynthesis via 2-oxoglutarate. Functionally, simultaneously catalyzes two reactions, namely formation of ethylene and of succinate from 2-oxoglutarate. The polypeptide is 2-oxoglutarate-dependent ethylene/succinate-forming enzyme (efe) (Ralstonia nicotianae (strain ATCC BAA-1114 / GMI1000) (Ralstonia solanacearum)).